We begin with the raw amino-acid sequence, 87 residues long: uncharacterized protein (87 aa).

This is an uncharacterized protein from Bacillus subtilis (strain 168).